A 174-amino-acid chain; its full sequence is ATP synthase subunit b (174 aa).

A helical transmembrane segment spans residues 15 to 33; sequence NPGLVIWTLVTFSVVVFVL.

It belongs to the ATPase B chain family. F-type ATPases have 2 components, F(1) - the catalytic core - and F(0) - the membrane proton channel. F(1) has five subunits: alpha(3), beta(3), gamma(1), delta(1), epsilon(1). F(0) has three main subunits: a(1), b(2) and c(10-14). The alpha and beta chains form an alternating ring which encloses part of the gamma chain. F(1) is attached to F(0) by a central stalk formed by the gamma and epsilon chains, while a peripheral stalk is formed by the delta and b chains.

It is found in the cell inner membrane. F(1)F(0) ATP synthase produces ATP from ADP in the presence of a proton or sodium gradient. F-type ATPases consist of two structural domains, F(1) containing the extramembraneous catalytic core and F(0) containing the membrane proton channel, linked together by a central stalk and a peripheral stalk. During catalysis, ATP synthesis in the catalytic domain of F(1) is coupled via a rotary mechanism of the central stalk subunits to proton translocation. Its function is as follows. Component of the F(0) channel, it forms part of the peripheral stalk, linking F(1) to F(0). In Leptospira biflexa serovar Patoc (strain Patoc 1 / Ames), this protein is ATP synthase subunit b.